Here is a 487-residue protein sequence, read N- to C-terminus: Protein nucleotidyltransferase YdiU (487 aa).

Residues glycine 90, glycine 92, arginine 93, lysine 113, aspartate 125, glycine 126, arginine 176, and arginine 183 each contribute to the ATP site. Residue aspartate 252 is the Proton acceptor of the active site. Asparagine 253 and aspartate 262 together coordinate Mg(2+). Aspartate 262 contributes to the ATP binding site.

Belongs to the SELO family. It depends on Mg(2+) as a cofactor. Mn(2+) serves as cofactor.

The catalysed reaction is L-seryl-[protein] + ATP = 3-O-(5'-adenylyl)-L-seryl-[protein] + diphosphate. It catalyses the reaction L-threonyl-[protein] + ATP = 3-O-(5'-adenylyl)-L-threonyl-[protein] + diphosphate. It carries out the reaction L-tyrosyl-[protein] + ATP = O-(5'-adenylyl)-L-tyrosyl-[protein] + diphosphate. The enzyme catalyses L-histidyl-[protein] + UTP = N(tele)-(5'-uridylyl)-L-histidyl-[protein] + diphosphate. The catalysed reaction is L-seryl-[protein] + UTP = O-(5'-uridylyl)-L-seryl-[protein] + diphosphate. It catalyses the reaction L-tyrosyl-[protein] + UTP = O-(5'-uridylyl)-L-tyrosyl-[protein] + diphosphate. Its function is as follows. Nucleotidyltransferase involved in the post-translational modification of proteins. It can catalyze the addition of adenosine monophosphate (AMP) or uridine monophosphate (UMP) to a protein, resulting in modifications known as AMPylation and UMPylation. The chain is Protein nucleotidyltransferase YdiU from Pseudomonas fluorescens (strain Pf0-1).